A 446-amino-acid polypeptide reads, in one-letter code: Tol-Pal system protein TolB (446 aa).

Residues 1–24 form the signal peptide; sequence MKRAFLSALSVGLAALFLTGPAQA.

Belongs to the TolB family. The Tol-Pal system is composed of five core proteins: the inner membrane proteins TolA, TolQ and TolR, the periplasmic protein TolB and the outer membrane protein Pal. They form a network linking the inner and outer membranes and the peptidoglycan layer.

It localises to the periplasm. In terms of biological role, part of the Tol-Pal system, which plays a role in outer membrane invagination during cell division and is important for maintaining outer membrane integrity. The protein is Tol-Pal system protein TolB of Dinoroseobacter shibae (strain DSM 16493 / NCIMB 14021 / DFL 12).